Consider the following 134-residue polypeptide: Profilin-3 (134 aa).

The cysteines at positions 13 and 118 are disulfide-linked. The Involved in PIP2 interaction motif lies at 84–100; sequence AVIRGKKGSGGITIKKT. Threonine 114 bears the Phosphothreonine mark.

Belongs to the profilin family. In terms of assembly, occurs in many kinds of cells as a complex with monomeric actin in a 1:1 ratio. Phosphorylated by MAP kinases.

It is found in the cytoplasm. It localises to the cytoskeleton. Functionally, binds to actin and affects the structure of the cytoskeleton. At high concentrations, profilin prevents the polymerization of actin, whereas it enhances it at low concentrations. The polypeptide is Profilin-3 (Olea europaea (Common olive)).